The following is a 506-amino-acid chain: CDK5 regulatory subunit-associated protein 3 (506 aa).

Short sequence motifs (shuffled ATG8-binding motif) lie at residues 267 to 270 (IDWG), 292 to 295 (IDWG), and 310 to 313 (IDWG). The segment at 269–506 (WGDFGVEAVS…RPVNLMGTSL (238 aa)) is required for interaction with UFL1 and mediates interaction with CHEK1. The interval 355–370 (DELMELEIFLARRAVE) is RPL10a-binding domain (RBD). A Glycyl lysine isopeptide (Lys-Gly) (interchain with G-Cter in SUMO2) cross-link involves residue Lys450.

The protein belongs to the CDK5RAP3 family. In terms of assembly, substrate adapter component of the UFM1 ribosome E3 ligase (UREL) complex, composed of UFL1, DDRGK1 and CDK5RAP3. Interaction with UFL1 anchors CDK5RAP3 in the cytoplasm, preventing its translocation to the nucleus which allows expression of the CCND1 cyclin and progression of cells through the G1/S transition. Interacts with ATG8 family proteins MAP1LC3A, MAP1LC3B, GABARAP, GABARAPL1 and GABARAPL2. Interacts with CDK5R1; competes with CDK5RAP1 and CDK5RAP2. Interacts with RELA. Interacts with CHEK1; may negatively regulate CHEK1 and thereby stimulate entry into mitosis. Interacts with CDKN2A/ARF and MDM2; forms a ternary complex involved in regulation of p53/TP53. Interacts with MAPK14. Interacts with CCNB1. Interacts with TUBG1; may regulate CDK5RAP3 in mitotic G2/M transition checkpoint. In terms of processing, may be phosphorylated by CDK5. Post-translationally, ubiquitinated. Probably triggers proteasomal degradation and is negatively regulated by UFL1. May be ufmylated. In terms of processing, cleaved by caspases early during apoptosis, the resulting peptides may play a role in rupture of the nuclear envelope.

It localises to the endoplasmic reticulum membrane. The protein localises to the cytoplasm. It is found in the nucleus. The protein resides in the cytoskeleton. Its subcellular location is the microtubule organizing center. It localises to the centrosome. In terms of biological role, substrate adapter of E3 ligase complexes mediating ufmylation, the covalent attachment of the ubiquitin-like modifier UFM1 to substrate proteins, and which is involved in various processes, such as ribosome recycling and reticulophagy (also called ER-phagy). As part of the UREL complex, plays a key role in ribosome recycling by promoting mono-ufmylation of RPL26/uL24 subunit of the 60S ribosome. Ufmylation of RPL26/uL24 occurs on free 60S ribosomes following ribosome dissociation: it weakens the junction between post-termination 60S subunits and SEC61 translocons, promoting release and recycling of the large ribosomal subunit from the endoplasmic reticulum membrane. Ufmylation of RPL26/uL24 and subsequent 60S ribosome recycling either take place after normal termination of translation or after ribosome stalling during cotranslational translocation at the endoplasmic reticulum. Within the UREL complex, CDK5RAP3 acts as a substrate adapter that constrains UFL1 ligase activity to mono-ufmylate RPL26/uL24 at 'Lys-134'. The UREL complex is also involved in reticulophagy in response to endoplasmic reticulum stress by promoting ufmylation of proteins such as CYB5R3, thereby promoting lysosomal degradation of ufmylated proteins. Also acts as a regulator of transcription: negatively regulates NF-kappa-B-mediated gene transcription through the control of RELA phosphorylation. Also regulates mitotic G2/M transition checkpoint and mitotic G2 DNA damage checkpoint. Through its interaction with CDKN2A/ARF and MDM2 may induce MDM2-dependent p53/TP53 ubiquitination, stabilization and activation in the nucleus, thereby promoting G1 cell cycle arrest and inhibition of cell proliferation. May also play a role in the rupture of the nuclear envelope during apoptosis. May regulate MAPK14 activity by regulating its dephosphorylation by PPM1D/WIP1. Required for liver development. The polypeptide is CDK5 regulatory subunit-associated protein 3 (Pongo abelii (Sumatran orangutan)).